The following is a 766-amino-acid chain: Dipeptidyl peptidase 4 (766 aa).

The Cytoplasmic portion of the chain corresponds to 1–6; that stretch reads MKTPWK. The helical; Signal-anchor for type II membrane protein transmembrane segment at 7–27 threads the bilayer; that stretch reads VLLGLLGIAALVTVITVPVVL. The Extracellular segment spans residues 28–766; sequence LNKGTDDAAA…HFLKQCFSLP (739 aa). 8 N-linked (GlcNAc...) asparagine glycosylation sites follow: asparagine 85, asparagine 92, asparagine 150, asparagine 179, asparagine 219, asparagine 229, asparagine 279, and asparagine 321. Cystine bridges form between cysteine 385/cysteine 394, cysteine 444/cysteine 447, and cysteine 454/cysteine 472. Serine 630 acts as the Charge relay system in catalysis. A disulfide bridge connects residues cysteine 649 and cysteine 762. A glycan (N-linked (GlcNAc...) asparagine) is linked at asparagine 685. Active-site charge relay system residues include aspartate 708 and histidine 740.

The protein belongs to the peptidase S9B family. DPPIV subfamily. Monomer. Homodimer. Heterodimer with Seprase (FAP). Requires homodimerization for optimal dipeptidyl peptidase activity and T-cell costimulation. Found in a membrane raft complex, at least composed of BCL10, CARD11, DPP4 and IKBKB. Associates with collagen. Interacts with PTPRC; the interaction is enhanced in an interleukin-12-dependent manner in activated lymphocytes. Interacts (via extracellular domain) with ADA; does not inhibit its dipeptidyl peptidase activity. Interacts with CAV1 (via the N-terminus); the interaction is direct. Interacts (via cytoplasmic tail) with CARD11 (via PDZ domain); its homodimerization is necessary for interaction with CARD11. Interacts with IGF2R; the interaction is direct. Interacts with GPC3. The soluble form (Dipeptidyl peptidase 4 soluble form also named SDPP) derives from the membrane form (Dipeptidyl peptidase 4 membrane form also named MDPP) by proteolytic processing. Post-translationally, N- and O-Glycosylated. In terms of processing, phosphorylated. Mannose 6-phosphate residues in the carbohydrate moiety are necessary for interaction with IGF2R in activated T-cells. Mannose 6-phosphorylation is induced during T-cell activation.

Its subcellular location is the secreted. The protein localises to the cell membrane. The protein resides in the apical cell membrane. It is found in the cell projection. It localises to the invadopodium membrane. Its subcellular location is the lamellipodium membrane. The protein localises to the cell junction. The protein resides in the membrane raft. The enzyme catalyses Release of an N-terminal dipeptide, Xaa-Yaa-|-Zaa-, from a polypeptide, preferentially when Yaa is Pro, provided Zaa is neither Pro nor hydroxyproline.. Inhibited by GPC3 and diprotin A. Cell surface glycoprotein receptor involved in the costimulatory signal essential for T-cell receptor (TCR)-mediated T-cell activation. Acts as a positive regulator of T-cell coactivation, by binding at least ADA, CAV1, IGF2R, and PTPRC. Its binding to CAV1 and CARD11 induces T-cell proliferation and NF-kappa-B activation in a T-cell receptor/CD3-dependent manner. Its interaction with ADA also regulates lymphocyte-epithelial cell adhesion. In association with FAP is involved in the pericellular proteolysis of the extracellular matrix (ECM), the migration and invasion of endothelial cells into the ECM. May be involved in the promotion of lymphatic endothelial cells adhesion, migration and tube formation. When overexpressed, enhanced cell proliferation, a process inhibited by GPC3. Also acts as a serine exopeptidase with a dipeptidyl peptidase activity that regulates various physiological processes by cleaving peptides in the circulation, including many chemokines, mitogenic growth factors, neuropeptides and peptide hormones such as brain natriuretic peptide 32. Removes N-terminal dipeptides sequentially from polypeptides having unsubstituted N-termini provided that the penultimate residue is proline. The sequence is that of Dipeptidyl peptidase 4 (DPP4) from Sus scrofa (Pig).